The primary structure comprises 442 residues: Elongation factor 1-alpha (442 aa).

The tr-type G domain maps to 5–228 (KTHINIVVIG…DSVTPPERPV (224 aa)). The segment at 14–21 (GHVDSGKS) is G1. A GTP-binding site is contributed by 14 to 21 (GHVDSGKS). The tract at residues 70–74 (GITID) is G2. The tract at residues 91–94 (DAPG) is G3. GTP-binding positions include 91–95 (DAPGH) and 153–156 (NKMD). Residues 153 to 156 (NKMD) form a G4 region. A G5 region spans residues 192 to 194 (SGF).

It belongs to the TRAFAC class translation factor GTPase superfamily. Classic translation factor GTPase family. EF-Tu/EF-1A subfamily.

It localises to the cytoplasm. Functionally, this protein promotes the GTP-dependent binding of aminoacyl-tRNA to the A-site of ribosomes during protein biosynthesis. The protein is Elongation factor 1-alpha of Entamoeba histolytica (strain ATCC 30459 / HM-1:IMSS / ABRM).